Consider the following 863-residue polypeptide: Facilitated trehalose transporter Tret1 (863 aa).

A disordered region spans residues 1–208; that stretch reads MSGRDNRGAG…RIGFQQQKAT (208 aa). At 1-398 the chain is on the cytoplasmic side; the sequence is MSGRDNRGAG…VYRPTTNPIY (398 aa). Over residues 28–46 the composition is skewed to basic and acidic residues; the sequence is KLKEKLTRAGEELGYHRVE. Positions 47-59 are enriched in polar residues; the sequence is SNLSASNTGTSLD. Low complexity predominate over residues 72 to 85; that stretch reads AAPQRHPQQQFPHL. Polar residues-rich tracts occupy residues 114–129 and 177–187; these read PPQQ…RSSG and KPQQQGNNKAA. 3 positions are modified to phosphoserine: serine 254, serine 255, and serine 256. The tract at residues 286–307 is disordered; it reads VLQGSSTDSDEEGDDAEHKRLI. Serine 326 and serine 328 each carry phosphoserine. The disordered stretch occupies residues 332–354; that stretch reads FLTSRQNFQQQRSISTDSRKSRR. A compositionally biased stretch (polar residues) spans 336-347; it reads RQNFQQQRSIST. Residues 399-419 traverse the membrane as a helical segment; sequence IWTQVLAALSVSLGSLVVGFA. The Extracellular segment spans residues 420–446; it reads SAYTSPALVSMTNTNLTSFVVTPQAAS. Residue asparagine 434 is glycosylated (N-linked (GlcNAc...) asparagine). The chain crosses the membrane as a helical span at residues 447-467; that stretch reads WVGGIMPLAGLAGGIAGGPFI. Residues 468-479 are Cytoplasmic-facing; it reads EYLGRRNTILAT. The helical transmembrane segment at 480–500 threads the bilayer; it reads AVPFIISWLLIACAVNVVMVL. Topologically, residues 501 to 503 are extracellular; that stretch reads CGR. Residues 504–524 form a helical membrane-spanning segment; sequence FLAGFCVGIASLSLPVYLGET. The Cytoplasmic portion of the chain corresponds to 525–530; sequence VQPEVR. Residues 531-551 traverse the membrane as a helical segment; sequence GTLGLLPTAFGNIGILLCFVA. Residues 552-558 are Extracellular-facing; sequence GTYMDWS. A helical transmembrane segment spans residues 559–579; that stretch reads MLAFLGGTLPVPFLILMFLIP. Residues 580 to 642 lie on the Cytoplasmic side of the membrane; sequence ETPRWYVSRG…ELLKRSNLKP (63 aa). The chain crosses the membrane as a helical span at residues 643–663; that stretch reads LSISLGLMFFQQLSGINAVIF. Topologically, residues 664 to 679 are extracellular; it reads YTVQIFQDAGSTIDGN. The helical transmembrane segment at 680 to 700 threads the bilayer; it reads VCTIIVGVVNFMATFIATVLI. The Cytoplasmic portion of the chain corresponds to 701–706; the sequence is DRAGRK. Residues 707–727 traverse the membrane as a helical segment; the sequence is ILLYVSNVAMILTLFVLGGFF. Residues 728 to 746 lie on the Extracellular side of the membrane; it reads YCKSTGMDTSNVGWLPLSC. Residues 747 to 767 form a helical membrane-spanning segment; that stretch reads FVVYILGFSLGFGPIPWLMMG. Residues 768 to 773 lie on the Cytoplasmic side of the membrane; sequence EILPAK. The chain crosses the membrane as a helical span at residues 774 to 794; sequence IRGSAASVATAFNWSCTFVVT. At 795-807 the chain is on the extracellular side; sequence KSFQDMIDVMGAH. A helical membrane pass occupies residues 808 to 828; the sequence is GAFWMFGAICFVGLFFVIFYV. Residues 829-863 are Cytoplasmic-facing; it reads PETQGKTLEDIERKMMGRVRRMSSVANIKPLSFNM. Serine 851 and serine 852 each carry phosphoserine.

The protein belongs to the major facilitator superfamily. Sugar transporter (TC 2.A.1.1) family. Trehalose transporter subfamily.

The protein resides in the cell membrane. Functionally, low-capacity facilitative transporter for trehalose. Does not transport maltose, sucrose or lactose. Mediates the bidirectional transfer of trehalose. Responsible for the transport of trehalose synthesized in the fat body and the incorporation of trehalose into other tissues that require a carbon source, thereby regulating trehalose levels in the hemolymph. In Drosophila mojavensis (Fruit fly), this protein is Facilitated trehalose transporter Tret1.